Consider the following 309-residue polypeptide: Oxygen-dependent coproporphyrinogen-III oxidase (309 aa).

Residue Ser-94 coordinates substrate. 2 residues coordinate a divalent metal cation: His-98 and His-108. The active-site Proton donor is His-108. Substrate is bound at residue Asn-110–Arg-112. Residues His-147 and His-177 each contribute to the a divalent metal cation site. The important for dimerization stretch occupies residues Tyr-242–Glu-277. A substrate-binding site is contributed by Gly-260–Arg-262.

The protein belongs to the aerobic coproporphyrinogen-III oxidase family. Homodimer. It depends on a divalent metal cation as a cofactor.

The protein localises to the cytoplasm. It catalyses the reaction coproporphyrinogen III + O2 + 2 H(+) = protoporphyrinogen IX + 2 CO2 + 2 H2O. Its pathway is porphyrin-containing compound metabolism; protoporphyrin-IX biosynthesis; protoporphyrinogen-IX from coproporphyrinogen-III (O2 route): step 1/1. Functionally, involved in the heme biosynthesis. Catalyzes the aerobic oxidative decarboxylation of propionate groups of rings A and B of coproporphyrinogen-III to yield the vinyl groups in protoporphyrinogen-IX. This Yersinia pestis bv. Antiqua (strain Antiqua) protein is Oxygen-dependent coproporphyrinogen-III oxidase.